We begin with the raw amino-acid sequence, 1152 residues long: Syntaxin-binding protein 5 (1152 aa).

The tract at residues 14 to 35 (TAGSSSASQQQQQQQHPPGNRE) is disordered. The segment covering 17-28 (SSSASQQQQQQQ) has biased composition (low complexity). 10 WD repeats span residues 62 to 95 (SALA…CYCQ), 102 to 141 (VIQL…SLKF), 146 to 182 (VTFC…GYVI), 201 to 235 (HISD…DYRY), 241 to 273 (IHSV…PTKP), 295 to 337 (PILK…KSTA), 345 to 379 (IVDF…LIDL), 401 to 478 (TCCE…YKLK), 506 to 620 (QIIS…ELVI), and 634 to 696 (TSLA…SGAG). 2 disordered regions span residues 557–596 (TPEG…GLRD) and 675–731 (SNDP…QKVN). Serine 693 carries the phosphoserine modification. Positions 713-722 (SPTSGSSSPH) are enriched in low complexity. Serine 724 carries the post-translational modification Phosphoserine; by PKA. Serine 760 carries the post-translational modification Phosphoserine. Threonine 763 bears the Phosphothreonine mark. Serine 783 bears the Phosphoserine mark. Threonine 785 carries the phosphothreonine modification. Position 786 is a phosphoserine (serine 786). 4 WD repeats span residues 795–852 (ISAL…SGTI), 861–935 (RMAF…QNCA), 940–984 (ITET…LDVY), and 998–1021 (CFAN…TYSQ). Residues 879–893 (WTEHNVPEEKDEKEK) show a composition bias toward basic and acidic residues. Residues 879–907 (WTEHNVPEEKDEKEKLKKRRPVSVSPSSS) are disordered. 2 positions are modified to phosphoserine: serine 901 and serine 903. Threonine 1040 is modified (phosphothreonine). Serine 1059 and serine 1132 each carry phosphoserine. One can recognise a v-SNARE coiled-coil homology domain in the interval 1087 to 1147 (GIEGVKGAAS…HEMMLKYKDK (61 aa)).

Belongs to the WD repeat L(2)GL family. Part of a complex that contains STXBP5, STX4A and SNAP23. Interacts with STX1A and STX4A via its v-SNARE homology domain. Part of a complex that contains STX1, STXBP5, SNAP25 and SYT1. In terms of processing, phosphorylation by PKA reduces interaction with STX1A and enhances synaptic neurotransmitter release. Isoform 1 is detected in heart, brain, lung, liver, skeletal muscle, kidney and testis. Isoform 2 is detected in brain and in testis. Isoform 3 is detected in testis.

It is found in the cytoplasm. The protein resides in the cell membrane. It localises to the cytoplasmic vesicle membrane. Its subcellular location is the synapse. The protein localises to the cytoplasmic vesicle. It is found in the secretory vesicle. The protein resides in the synaptic vesicle. Functionally, inhibits translocation of GLUT4 from intracellular vesicles to the plasma membrane. Plays a regulatory role in calcium-dependent exocytosis and neurotransmitter release. Inhibits membrane fusion between transport vesicles and the plasma membrane. May modulate the assembly of trans-SNARE complexes between transport vesicles and the plasma membrane. Competes with STXBP1 for STX1 binding. The sequence is that of Syntaxin-binding protein 5 (Stxbp5) from Rattus norvegicus (Rat).